A 119-amino-acid polypeptide reads, in one-letter code: UPF0102 protein CGSHiGG_01960 (119 aa).

It belongs to the UPF0102 family.

The sequence is that of UPF0102 protein CGSHiGG_01960 from Haemophilus influenzae (strain PittGG).